Here is a 208-residue protein sequence, read N- to C-terminus: Dephospho-CoA kinase (208 aa).

The DPCK domain occupies 11–207 (VIGLTGGIAS…EYYLELAQHD (197 aa)). An ATP-binding site is contributed by 19–24 (ASGKSA).

The protein belongs to the CoaE family.

It is found in the cytoplasm. It carries out the reaction 3'-dephospho-CoA + ATP = ADP + CoA + H(+). The protein operates within cofactor biosynthesis; coenzyme A biosynthesis; CoA from (R)-pantothenate: step 5/5. In terms of biological role, catalyzes the phosphorylation of the 3'-hydroxyl group of dephosphocoenzyme A to form coenzyme A. The sequence is that of Dephospho-CoA kinase from Hahella chejuensis (strain KCTC 2396).